The chain runs to 492 residues: Transmembrane protein 39B (492 aa).

The interval 1–53 (MGGRRGPNRTSYYRNPLCEPGSSGASGGGHSSSASVSSVRSRSRTTSGTGLSS) is disordered. Asn-8 carries an N-linked (GlcNAc...) asparagine glycan. The span at 31–53 (SSSASVSSVRSRSRTTSGTGLSS) shows a compositional bias: low complexity. The next 8 membrane-spanning stretches (helical) occupy residues 77–97 (SILFELQLFFCQLIALFVHYI), 115–135 (TSLNFHLIDFNLLMVTTIVLG), 153–175 (SLFRSILLFLTRFTVLTATGWSL), 185–205 (TYSFLNLLFLCYPFGMYIPFL), 288–308 (EVLVSSMLSAYYVAFVPVWFV), 322–342 (LFLLVSISTSVILMQHLLPAS), 421–441 (ILNILLLLEGAVIVYQLYSLM), and 447–467 (HQTISLALILFSNYYAFFKLL).

This sequence belongs to the TMEM39 family.

The protein localises to the endoplasmic reticulum membrane. Its function is as follows. May protect the cells against DNA damage caused by exposure to the cold-warming stress and facilitates tissue damage repair during the recovery phase. This is Transmembrane protein 39B from Rattus norvegicus (Rat).